The primary structure comprises 233 residues: Orotidine 5'-phosphate decarboxylase (233 aa).

Residues aspartate 11, lysine 34, 61–70 (DLKLHDIPNT), threonine 117, arginine 179, glutamine 188, glycine 208, and arginine 209 each bind substrate. Lysine 63 serves as the catalytic Proton donor.

The protein belongs to the OMP decarboxylase family. Type 1 subfamily. As to quaternary structure, homodimer.

The catalysed reaction is orotidine 5'-phosphate + H(+) = UMP + CO2. It participates in pyrimidine metabolism; UMP biosynthesis via de novo pathway; UMP from orotate: step 2/2. Functionally, catalyzes the decarboxylation of orotidine 5'-monophosphate (OMP) to uridine 5'-monophosphate (UMP). The chain is Orotidine 5'-phosphate decarboxylase from Streptococcus pneumoniae (strain Hungary19A-6).